The following is a 476-amino-acid chain: Aspartyl/glutamyl-tRNA(Asn/Gln) amidotransferase subunit B (476 aa).

Belongs to the GatB/GatE family. GatB subfamily. Heterotrimer of A, B and C subunits.

It catalyses the reaction L-glutamyl-tRNA(Gln) + L-glutamine + ATP + H2O = L-glutaminyl-tRNA(Gln) + L-glutamate + ADP + phosphate + H(+). It carries out the reaction L-aspartyl-tRNA(Asn) + L-glutamine + ATP + H2O = L-asparaginyl-tRNA(Asn) + L-glutamate + ADP + phosphate + 2 H(+). Its function is as follows. Allows the formation of correctly charged Asn-tRNA(Asn) or Gln-tRNA(Gln) through the transamidation of misacylated Asp-tRNA(Asn) or Glu-tRNA(Gln) in organisms which lack either or both of asparaginyl-tRNA or glutaminyl-tRNA synthetases. The reaction takes place in the presence of glutamine and ATP through an activated phospho-Asp-tRNA(Asn) or phospho-Glu-tRNA(Gln). In Variovorax paradoxus (strain S110), this protein is Aspartyl/glutamyl-tRNA(Asn/Gln) amidotransferase subunit B.